The primary structure comprises 259 residues: Small ribosomal subunit protein eS1 (259 aa).

Belongs to the eukaryotic ribosomal protein eS1 family. In terms of assembly, component of the small ribosomal subunit. Mature ribosomes consist of a small (40S) and a large (60S) subunit. The 40S subunit contains about 33 different proteins and 1 molecule of RNA (18S). The 60S subunit contains about 49 different proteins and 3 molecules of RNA (25S, 5.8S and 5S).

It localises to the cytoplasm. The chain is Small ribosomal subunit protein eS1 from Monosiga brevicollis (Choanoflagellate).